Reading from the N-terminus, the 340-residue chain is ATPase GET3 (340 aa).

Position 35–42 (35–42 (KGGVGKTT)) interacts with ATP. Asp64 is a catalytic residue. Positions 245 and 272 each coordinate ATP. Residues Cys283 and Cys286 each coordinate Zn(2+).

It belongs to the arsA ATPase family. As to quaternary structure, homodimer.

It localises to the cytoplasm. The protein resides in the endoplasmic reticulum. In terms of biological role, ATPase required for the post-translational delivery of tail-anchored (TA) proteins to the endoplasmic reticulum. Recognizes and selectively binds the transmembrane domain of TA proteins in the cytosol. This complex then targets to the endoplasmic reticulum by membrane-bound receptors, where the tail-anchored protein is released for insertion. This process is regulated by ATP binding and hydrolysis. ATP binding drives the homodimer towards the closed dimer state, facilitating recognition of newly synthesized TA membrane proteins. ATP hydrolysis is required for insertion. Subsequently, the homodimer reverts towards the open dimer state, lowering its affinity for the membrane-bound receptor, and returning it to the cytosol to initiate a new round of targeting. The sequence is that of ATPase GET3 from Chaetomium globosum (strain ATCC 6205 / CBS 148.51 / DSM 1962 / NBRC 6347 / NRRL 1970) (Soil fungus).